The chain runs to 337 residues: Glyceraldehyde-3-phosphate dehydrogenase (337 aa).

Residues 11–12 (TV), 34–35 (TR), and glycine 110 contribute to the NADP(+) site. 139 to 141 (SCN) contributes to the D-glyceraldehyde 3-phosphate binding site. The active-site Nucleophile is cysteine 140. Residue aspartate 171 participates in NADP(+) binding. 194 to 195 (HG) contacts D-glyceraldehyde 3-phosphate. Glutamine 300 contacts NADP(+).

It belongs to the glyceraldehyde-3-phosphate dehydrogenase family. In terms of assembly, homotetramer.

It is found in the cytoplasm. The catalysed reaction is D-glyceraldehyde 3-phosphate + phosphate + NADP(+) = (2R)-3-phospho-glyceroyl phosphate + NADPH + H(+). It catalyses the reaction D-glyceraldehyde 3-phosphate + phosphate + NAD(+) = (2R)-3-phospho-glyceroyl phosphate + NADH + H(+). The protein operates within carbohydrate degradation; glycolysis; pyruvate from D-glyceraldehyde 3-phosphate: step 1/5. Exhibits a dual-cofactor specificity, with a marked preference for NADP(+) over NAD(+). In Methanothermus fervidus, this protein is Glyceraldehyde-3-phosphate dehydrogenase (gap).